The following is a 751-amino-acid chain: Glutamate carboxypeptidase 2 (751 aa).

Over 1–19 the chain is Cytoplasmic; it reads MWNPLHETDSTSVAWRRPR. At Ser10 the chain carries Phosphoserine. A helical; Signal-anchor for type II membrane protein membrane pass occupies residues 20–43; it reads WLCAGALVLAAGLFVLGFLFGWFI. Over 44–750 the chain is Extracellular; the sequence is KSPNEAANIS…QAAAGTLREV (707 aa). 6 N-linked (GlcNAc...) asparagine glycosylation sites follow: Asn51, Asn77, Asn122, Asn141, Asn154, and Asn196. 2 residues coordinate substrate: Arg211 and Asn258. Residues Thr270 and Tyr273 each contribute to the Ca(2+) site. The segment at 275–588 is NAALADase; that stretch reads ANEYAYRLQI…QVRGGIVFEL (314 aa). N-linked (GlcNAc...) asparagine glycosylation occurs at Asn337. Residues His378 and Asp388 each contribute to the Zn(2+) site. Glu425 contacts substrate. Glu425 (nucleophile; for NAALADase activity) is an active-site residue. Residue Glu426 participates in Zn(2+) binding. Residues Glu434 and Glu437 each contribute to the Ca(2+) site. Asp454 is a binding site for Zn(2+). Asn460 and Asn477 each carry an N-linked (GlcNAc...) asparagine glycan. Residues 518–519, Asn520, 535–537, Tyr553, and 553–554 each bind substrate; these read SG, RAR, and YH. His554 is a Zn(2+) binding site. A glycan (N-linked (GlcNAc...) asparagine) is linked at Asn614. The active-site Charge relay system is the Ser629. Residues Asn639 and Asn646 are each glycosylated (N-linked (GlcNAc...) asparagine). Catalysis depends on charge relay system residues Asp667 and His690. 700-701 serves as a coordination point for substrate; that stretch reads KY.

The protein belongs to the peptidase M28 family. M28B subfamily. Homodimer. It depends on Zn(2+) as a cofactor. In terms of tissue distribution, high expression in the duodenum and in the jejunum brush-border membrane. Weak expression in kidney.

The protein resides in the cell membrane. It carries out the reaction Release of an unsubstituted, C-terminal glutamyl residue, typically from Ac-Asp-Glu or folylpoly-gamma-glutamates.. The NAALADase activity is inhibited by quisqualic acid, beta-NAAG and 2-(phosphonomethyl) pentanedioic acid (PMPA). Ethanol ingestion decreases the folate hydrolase activity by 50%. Functionally, has both folate hydrolase and N-acetylated-alpha-linked-acidic dipeptidase (NAALADase) activity. Has a preference for tri-alpha-glutamate peptides. In the intestine, required for the uptake of folate. In the brain, modulates excitatory neurotransmission through the hydrolysis of the neuropeptide, N-aceylaspartylglutamate (NAAG), thereby releasing glutamate. In terms of biological role, also exhibits a dipeptidyl-peptidase IV type activity. In vitro, cleaves Gly-Pro-AMC. The polypeptide is Glutamate carboxypeptidase 2 (FOLH1) (Sus scrofa (Pig)).